Here is a 169-residue protein sequence, read N- to C-terminus: Gametocyte-specific factor 1-like (169 aa).

CHHC U11-48K-type zinc fingers lie at residues 6–33 (LETC…RRKN) and 40–67 (MASC…VNKS). Zn(2+) contacts are provided by C9, H15, H25, C29, C43, H49, H59, and C63. Disordered stretches follow at residues 67–103 (STME…LPNP) and 131–169 (SDTR…LLKA). Residues 131–158 (SDTRESETDDHNPIPDCPRRRSSDRESE) are compositionally biased toward basic and acidic residues.

It belongs to the UPF0224 (FAM112) family.

This Bos taurus (Bovine) protein is Gametocyte-specific factor 1-like (GTSF1L).